The primary structure comprises 333 residues: MPPTINMGIPGASSSVTGGVSGKRVLLAEPRGYCAGVDRAVETVERALEKHGAPVYVRHEIVHNRYVVDTLAKAGAVFVEQTDEVPEGAIVVFSAHGVAPTVHVEAAARNLKTIDATCPLVTKVHNEAKRFARDDYDILLVGHEGHEEVVGTAGEAPDHVQVVDNPDAVDKVTVRDPDKVIWLSQTTLSVDETMETVRRLREKFPTLQDPPSDDICYATQNRQVAVKAMAPECELVIVVGSKNSSNSVRLVEVALGAGSDAAHLVDYAEDIDPTWLDGVTTVGVTSGASVPEVLVRGVLDRLAEYGYGTVQPVTTANETLVFALPREIRPARS.

Cys-34 is a binding site for [4Fe-4S] cluster. Residues His-63 and His-96 each contribute to the (2E)-4-hydroxy-3-methylbut-2-enyl diphosphate site. Dimethylallyl diphosphate-binding residues include His-63 and His-96. Residues His-63 and His-96 each contribute to the isopentenyl diphosphate site. Residue Cys-118 coordinates [4Fe-4S] cluster. His-146 serves as a coordination point for (2E)-4-hydroxy-3-methylbut-2-enyl diphosphate. Position 146 (His-146) interacts with dimethylallyl diphosphate. His-146 is an isopentenyl diphosphate binding site. Glu-148 serves as the catalytic Proton donor. Residue Thr-186 participates in (2E)-4-hydroxy-3-methylbut-2-enyl diphosphate binding. Cys-216 lines the [4Fe-4S] cluster pocket. Residues Ser-244, Ser-245, Asn-246, and Ser-289 each contribute to the (2E)-4-hydroxy-3-methylbut-2-enyl diphosphate site. Residues Ser-244, Ser-245, Asn-246, and Ser-289 each coordinate dimethylallyl diphosphate. Isopentenyl diphosphate contacts are provided by Ser-244, Ser-245, Asn-246, and Ser-289.

Belongs to the IspH family. It depends on [4Fe-4S] cluster as a cofactor.

It catalyses the reaction isopentenyl diphosphate + 2 oxidized [2Fe-2S]-[ferredoxin] + H2O = (2E)-4-hydroxy-3-methylbut-2-enyl diphosphate + 2 reduced [2Fe-2S]-[ferredoxin] + 2 H(+). The enzyme catalyses dimethylallyl diphosphate + 2 oxidized [2Fe-2S]-[ferredoxin] + H2O = (2E)-4-hydroxy-3-methylbut-2-enyl diphosphate + 2 reduced [2Fe-2S]-[ferredoxin] + 2 H(+). It functions in the pathway isoprenoid biosynthesis; dimethylallyl diphosphate biosynthesis; dimethylallyl diphosphate from (2E)-4-hydroxy-3-methylbutenyl diphosphate: step 1/1. The protein operates within isoprenoid biosynthesis; isopentenyl diphosphate biosynthesis via DXP pathway; isopentenyl diphosphate from 1-deoxy-D-xylulose 5-phosphate: step 6/6. Functionally, catalyzes the conversion of 1-hydroxy-2-methyl-2-(E)-butenyl 4-diphosphate (HMBPP) into a mixture of isopentenyl diphosphate (IPP) and dimethylallyl diphosphate (DMAPP). Acts in the terminal step of the DOXP/MEP pathway for isoprenoid precursor biosynthesis. In Mycobacterium sp. (strain JLS), this protein is 4-hydroxy-3-methylbut-2-enyl diphosphate reductase.